We begin with the raw amino-acid sequence, 188 residues long: uncharacterized protein (188 aa).

Residues 136–156 (TLVKLLLLFLSLMVVIVGVWW) traverse the membrane as a helical segment.

The protein resides in the host membrane. This is an uncharacterized protein from Magallana gigas (Pacific oyster).